The sequence spans 344 residues: RNA 3'-terminal phosphate cyclase (344 aa).

Residues glutamine 102 and 284–288 (FLGDQ) contribute to the ATP site. Residue histidine 308 is the Tele-AMP-histidine intermediate of the active site.

It belongs to the RNA 3'-terminal cyclase family. Type 1 subfamily.

Its subcellular location is the cytoplasm. It carries out the reaction a 3'-end 3'-phospho-ribonucleotide-RNA + ATP = a 3'-end 2',3'-cyclophospho-ribonucleotide-RNA + AMP + diphosphate. Catalyzes the conversion of 3'-phosphate to a 2',3'-cyclic phosphodiester at the end of RNA. The mechanism of action of the enzyme occurs in 3 steps: (A) adenylation of the enzyme by ATP; (B) transfer of adenylate to an RNA-N3'P to produce RNA-N3'PP5'A; (C) and attack of the adjacent 2'-hydroxyl on the 3'-phosphorus in the diester linkage to produce the cyclic end product. The biological role of this enzyme is unknown but it is likely to function in some aspects of cellular RNA processing. The chain is RNA 3'-terminal phosphate cyclase from Thermococcus gammatolerans (strain DSM 15229 / JCM 11827 / EJ3).